A 94-amino-acid polypeptide reads, in one-letter code: Neutrophil defensin 1 (94 aa).

The signal sequence occupies residues 1 to 19; sequence MRTLAILAAILLVALQAQA. Residues 20–64 constitute a propeptide that is removed on maturation; sequence EPLQARADEVAAAPEQIPADNPEVVVSLAWDESLAPKHPGSRKNV. Cystine bridges form between C66–C94, C68–C83, and C73–C93. R78 is modified (ADP-ribosylarginine; by ART1). Y85 carries the phosphotyrosine modification. R88 is subject to ADP-ribosylarginine; by ART1.

It belongs to the alpha-defensin family. Tetramer. Dimer. Interacts with RETN. Post-translationally, ADP-ribosylation drastically reduces cytotoxic and antibacterial activities, and enhances IL8 production.

Its subcellular location is the secreted. Its function is as follows. Effector molecule of the innate immune system that acts via antibiotic-like properties against a broad array of infectious agents including bacteria, fungi, and viruses or by promoting the activation and maturation of some APCs. Interacts with the essential precursor of cell wall synthesis lipid II to inhibit bacterial cell wall synthesis. Inhibits adenovirus infection via inhibition of viral disassembly at the vertex region, thereby restricting the release of internal capsid protein pVI, which is required for endosomal membrane penetration during cell entry. In addition, interaction with adenovirus capsid leads to the redirection of viral particles to TLR4 thereby promoting a NLRP3-mediated inflammasome response and interleukin 1-beta (IL-1beta) release. Induces the production of proinflammatory cytokines including type I interferon (IFN) in plasmacytoid dendritic cells (pDCs) by triggering the degradation of NFKBIA and nuclear translocation of IRF1, both of which are required for activation of pDCs. The sequence is that of Neutrophil defensin 1 (DEFA1) from Pan troglodytes (Chimpanzee).